The primary structure comprises 33 residues: MSDIN-like toxin proprotein 2 (33 aa).

Positions 1–10 are excised as a propeptide; sequence MSDINATRLP. A cross-link (cyclopeptide (Ile-Pro)) is located at residues 11–18; that stretch reads IILAPIIP. Residues 19–33 constitute a propeptide that is removed on maturation; it reads CINDDVNSTLTSGER.

It belongs to the MSDIN fungal toxin family. Post-translationally, processed by the macrocyclase-peptidase enzyme POPB to yield a toxic cyclic octapeptide. POPB first removes 10 residues from the N-terminus. Conformational trapping of the remaining peptide forces the enzyme to release this intermediate rather than proceed to macrocyclization. The enzyme rebinds the remaining peptide in a different conformation and catalyzes macrocyclization of the N-terminal 8 residues.

Probable toxin that belongs to the MSDIN-like toxin family responsible for a large number of food poisoning cases and deaths. The protein is MSDIN-like toxin proprotein 2 of Amanita phalloides (Death cap).